The chain runs to 294 residues: 4-hydroxy-tetrahydrodipicolinate synthase (294 aa).

Thr47 provides a ligand contact to pyruvate. Residue Tyr135 is the Proton donor/acceptor of the active site. The Schiff-base intermediate with substrate role is filled by Lys163. Pyruvate is bound at residue Ile206.

This sequence belongs to the DapA family. Homodimer.

The protein resides in the cytoplasm. It catalyses the reaction L-aspartate 4-semialdehyde + pyruvate = (2S,4S)-4-hydroxy-2,3,4,5-tetrahydrodipicolinate + H2O + H(+). Its pathway is amino-acid biosynthesis; L-lysine biosynthesis via DAP pathway; (S)-tetrahydrodipicolinate from L-aspartate: step 3/4. Catalyzes the condensation of (S)-aspartate-beta-semialdehyde [(S)-ASA] and pyruvate to 4-hydroxy-tetrahydrodipicolinate (HTPA). This is 4-hydroxy-tetrahydrodipicolinate synthase from Staphylococcus epidermidis (strain ATCC 35984 / DSM 28319 / BCRC 17069 / CCUG 31568 / BM 3577 / RP62A).